The primary structure comprises 294 residues: Cell division protein ZipA (294 aa).

Residue M1 is a topological domain, periplasmic. A helical membrane pass occupies residues 2–22; that stretch reads EIGLREWLILIGIIVIAGILF. Over 23–294 the chain is Cytoplasmic; sequence DGWRRMRGGK…FERRALTQKR (272 aa). 2 disordered regions span residues 64–111 and 126–146; these read THKE…GDLN and KDDF…STPV. The span at 82 to 91 shows a compositional bias: basic and acidic residues; the sequence is ARERERDPKP.

It belongs to the ZipA family. As to quaternary structure, interacts with FtsZ via their C-terminal domains.

The protein resides in the cell inner membrane. Essential cell division protein that stabilizes the FtsZ protofilaments by cross-linking them and that serves as a cytoplasmic membrane anchor for the Z ring. Also required for the recruitment to the septal ring of downstream cell division proteins. The protein is Cell division protein ZipA of Pseudomonas entomophila (strain L48).